We begin with the raw amino-acid sequence, 382 residues long: Mannitol-1-phosphate 5-dehydrogenase (382 aa).

3–14 (ALHFGAGNIGRG) contributes to the NAD(+) binding site.

The protein belongs to the mannitol dehydrogenase family.

It catalyses the reaction D-mannitol 1-phosphate + NAD(+) = beta-D-fructose 6-phosphate + NADH + H(+). In Mannheimia succiniciproducens (strain KCTC 0769BP / MBEL55E), this protein is Mannitol-1-phosphate 5-dehydrogenase.